The sequence spans 166 residues: Large ribosomal subunit protein mL41 (166 aa).

The N-terminal 26 residues, 1-26 (MQNCIKLVPLALKCPQRAISTSAVLD), are a transit peptide targeting the mitochondrion.

Belongs to the mitochondrion-specific ribosomal protein mL41 family. In terms of assembly, component of the mitochondrial ribosome large subunit (39S) which comprises a 16S rRNA and about 50 distinct proteins.

The protein localises to the mitochondrion. This Drosophila pseudoobscura pseudoobscura (Fruit fly) protein is Large ribosomal subunit protein mL41 (mRpL41).